A 458-amino-acid polypeptide reads, in one-letter code: Putative U-box domain-containing protein 46 (458 aa).

Residues 71 to 144 (EVPKEFICTL…TQWCLVNKYD (74 aa)) enclose the U-box domain. 2 ARM repeats span residues 241–281 (ESNK…SLSA) and 283–322 (DSNKIIIGNSEAVKALIDLIEEGDLLATKEATSTVFNLCI).

It carries out the reaction S-ubiquitinyl-[E2 ubiquitin-conjugating enzyme]-L-cysteine + [acceptor protein]-L-lysine = [E2 ubiquitin-conjugating enzyme]-L-cysteine + N(6)-ubiquitinyl-[acceptor protein]-L-lysine.. The protein operates within protein modification; protein ubiquitination. Its function is as follows. Functions as an E3 ubiquitin ligase. This is Putative U-box domain-containing protein 46 (PUB46) from Arabidopsis thaliana (Mouse-ear cress).